Reading from the N-terminus, the 117-residue chain is Protein Aeq5-like2 (117 aa).

At 1-36 (MLVNARAIRQSIGIVVAQCRRDLESNRTLDYRTRMR) the chain is on the cytoplasmic side. A helical membrane pass occupies residues 37 to 56 (TSLILVAMVMVSVLLPYTYG). Residues 57 to 117 (SSCDSFCTEQ…RFTKEPTEES (61 aa)) lie on the Extracellular side of the membrane. Cystine bridges form between Cys59–Cys94, Cys63–Cys90, Cys70–Cys83, and Cys74–Cys80.

The mature peptide may be cleaved at a dibasic residue site and be shorter than the sequence shown (possibly residues 1-94). In terms of tissue distribution, expressed in endodermal ganglion neurons, apparently bipolar and following mesentery folds (observed in both planulae and primary polyps). It not expressed in nematocytes.

The protein resides in the membrane. The polypeptide is Protein Aeq5-like2 (Nematostella vectensis (Starlet sea anemone)).